A 438-amino-acid polypeptide reads, in one-letter code: Xylose isomerase (438 aa).

Asp-306 and Asp-308 together coordinate Mg(2+).

Belongs to the xylose isomerase family. As to quaternary structure, homotetramer. Requires Mg(2+) as cofactor.

It is found in the cytoplasm. It carries out the reaction alpha-D-xylose = alpha-D-xylulofuranose. This chain is Xylose isomerase, found in Caldicellulosiruptor bescii (strain ATCC BAA-1888 / DSM 6725 / KCTC 15123 / Z-1320) (Anaerocellum thermophilum).